Consider the following 70-residue polypeptide: MIYKVLYQKDKIQNPRRETTQTLYLEAPSAVEARALVEKNTPYNIEFIQELSGNFLEYEEKSANFKLTTF.

Belongs to the RNA polymerase subunit epsilon family. RNAP is composed of a core of 2 alpha, a beta and a beta' subunit. The core is associated with a delta subunit, and at least one of epsilon or omega. When a sigma factor is associated with the core the holoenzyme is formed, which can initiate transcription.

It catalyses the reaction RNA(n) + a ribonucleoside 5'-triphosphate = RNA(n+1) + diphosphate. Functionally, a non-essential component of RNA polymerase (RNAP). This is DNA-directed RNA polymerase subunit epsilon from Lacticaseibacillus casei (strain BL23) (Lactobacillus casei).